Here is a 268-residue protein sequence, read N- to C-terminus: tRNA (guanine-N(1)-)-methyltransferase (268 aa).

Residues Gly-110 and Ile-129–Met-134 contribute to the S-adenosyl-L-methionine site. Positions Trp-246–Ser-268 are disordered.

It belongs to the RNA methyltransferase TrmD family. As to quaternary structure, homodimer.

Its subcellular location is the cytoplasm. It catalyses the reaction guanosine(37) in tRNA + S-adenosyl-L-methionine = N(1)-methylguanosine(37) in tRNA + S-adenosyl-L-homocysteine + H(+). Functionally, specifically methylates guanosine-37 in various tRNAs. The sequence is that of tRNA (guanine-N(1)-)-methyltransferase from Deinococcus deserti (strain DSM 17065 / CIP 109153 / LMG 22923 / VCD115).